The chain runs to 506 residues: Gamma-aminobutyric acid receptor subunit epsilon (506 aa).

The signal sequence occupies residues Met1–Gln17. Topologically, residues Trp18 to Arg277 are extracellular. The tract at residues Ala32–Pro65 is disordered. A compositionally biased stretch (basic and acidic residues) spans Pro50 to Pro65. Asn135 carries N-linked (GlcNAc...) asparagine glycosylation. Cys196 and Cys210 are joined by a disulfide. N-linked (GlcNAc...) asparagine glycosylation occurs at Asn253. Residues Phe278–Val298 traverse the membrane as a helical segment. Topologically, residues Ser299–Ala308 are cytoplasmic. The helical transmembrane segment at Ala309–Ser328 threads the bilayer. Over Arg329–Tyr344 the chain is Extracellular. The helical transmembrane segment at Ile345–Leu365 threads the bilayer. The Cytoplasmic segment spans residues Thr366 to Arg485. Residues Val486–Leu506 form a helical membrane-spanning segment.

This sequence belongs to the ligand-gated ion channel (TC 1.A.9) family. Gamma-aminobutyric acid receptor (TC 1.A.9.5) subfamily. GABRE sub-subfamily. As to quaternary structure, heteropentamer, formed by a combination of alpha (GABRA1-6), beta (GABRB1-3), gamma (GABRG1-3), delta (GABRD), epsilon (GABRE), rho (GABRR1-3), pi (GABRP) and theta (GABRQ) chains, each subunit exhibiting distinct physiological and pharmacological properties. Expressed in brain and heart. Strongly expressed in locus ceruleus from the first postnatal day. Weakly expressed in other brainstem nuclei and in the hypothalamus. Found in the cerebral cortex of pups.

It is found in the cell membrane. The protein localises to the postsynaptic cell membrane. The enzyme catalyses chloride(in) = chloride(out). Functionally, epsilon subunit of the heteropentameric ligand-gated chloride channel gated by gamma-aminobutyric acid (GABA), a major inhibitory neurotransmitter in the brain. GABA-gated chloride channels, also named GABA(A) receptors (GABAAR), consist of five subunits arranged around a central pore and contain GABA active binding site(s) located at the alpha and beta subunit interfaces. When activated by GABA, GABAARs selectively allow the flow of chloride anions across the cell membrane down their electrochemical gradient. GABARs containing epsilon subunit may also permit spontaneous chloride channel activity while preserving the structural information required for GABA-gated openings. GABARs containing epsilon subunit may regulate cardiac function. This is Gamma-aminobutyric acid receptor subunit epsilon from Rattus norvegicus (Rat).